A 339-amino-acid chain; its full sequence is Ketol-acid reductoisomerase (NADP(+)) (339 aa).

One can recognise a KARI N-terminal Rossmann domain in the interval 1-182 (MRVYYDRDAD…GGGRSGIIET (182 aa)). NADP(+) is bound by residues 24 to 27 (YGSQ), R48, S51, S53, and 83 to 86 (DELQ). Residue H108 is part of the active site. G134 provides a ligand contact to NADP(+). In terms of domain architecture, KARI C-terminal knotted spans 183–328 (TFREECETDL…EKLRAMMPWI (146 aa)). Mg(2+)-binding residues include D191, E195, E227, and E231. S252 is a binding site for substrate.

This sequence belongs to the ketol-acid reductoisomerase family. Mg(2+) serves as cofactor.

It carries out the reaction (2R)-2,3-dihydroxy-3-methylbutanoate + NADP(+) = (2S)-2-acetolactate + NADPH + H(+). The enzyme catalyses (2R,3R)-2,3-dihydroxy-3-methylpentanoate + NADP(+) = (S)-2-ethyl-2-hydroxy-3-oxobutanoate + NADPH + H(+). The protein operates within amino-acid biosynthesis; L-isoleucine biosynthesis; L-isoleucine from 2-oxobutanoate: step 2/4. It participates in amino-acid biosynthesis; L-valine biosynthesis; L-valine from pyruvate: step 2/4. In terms of biological role, involved in the biosynthesis of branched-chain amino acids (BCAA). Catalyzes an alkyl-migration followed by a ketol-acid reduction of (S)-2-acetolactate (S2AL) to yield (R)-2,3-dihydroxy-isovalerate. In the isomerase reaction, S2AL is rearranged via a Mg-dependent methyl migration to produce 3-hydroxy-3-methyl-2-ketobutyrate (HMKB). In the reductase reaction, this 2-ketoacid undergoes a metal-dependent reduction by NADPH to yield (R)-2,3-dihydroxy-isovalerate. The sequence is that of Ketol-acid reductoisomerase (NADP(+)) from Chelativorans sp. (strain BNC1).